A 685-amino-acid chain; its full sequence is Delta-like protein 4 (685 aa).

The N-terminal stretch at M1 to G26 is a signal peptide. The Extracellular segment spans residues S27–W529. Cystine bridges form between C50/C54 and C61/C74. N-linked (GlcNAc...) asparagine glycans are attached at residues N108 and N183. One can recognise a DSL domain in the interval V173–C217. C175 and C184 form a disulfide bridge. 2 interaction with Notch1 regions span residues S185–L187 and R191–F195. A disulfide bond links C188 and C200. N205 is a glycosylation site (N-linked (GlcNAc...) asparagine). 25 disulfide bridges follow: C208–C217, C222–C233, C226–C239, C241–C250, C253–C264, C259–C270, C272–C281, C288–C300, C294–C310, C312–C321, C328–C339, C333–C348, C350–C359, C366–C377, C371–C388, C390–C399, C406–C417, C411–C426, C428–C437, C444–C455, C449–C464, C466–C475, C484–C495, C489–C506, and C508–C517. EGF-like domains are found at residues Q218–N251, E252–D282, D284–E322, E324–E360, S362–E400, K402–E438, H440–E476, and S480–E518. A glycan (N-linked (GlcNAc...) asparagine) is linked at N393. Residues V530–V550 traverse the membrane as a helical segment. Residues A551–V685 are Cytoplasmic-facing.

In terms of assembly, interacts with NOTCH4. Interacts (via N-terminal DSL and MNNL domains) with NOTCH1 (via EGF-like domains). Expressed in vascular endothelium.

Its subcellular location is the cell membrane. Involved in the Notch signaling pathway as Notch ligand. Activates NOTCH1 and NOTCH4. Involved in angiogenesis; negatively regulates endothelial cell proliferation and migration and angiogenic sprouting. Essential for retinal progenitor proliferation. Required for suppressing rod fates in late retinal progenitors as well as for proper generation of other retinal cell types. During spinal cord neurogenesis, inhibits V2a interneuron fate. This is Delta-like protein 4 (DLL4) from Homo sapiens (Human).